A 304-amino-acid chain; its full sequence is Probable solute-binding protein AdeT1 (304 aa).

The protein belongs to the bacterial solute-binding protein 7 family.

Its function is as follows. Mediates antimicrobial resistance via active efflux. Contributes to resistance to antibiotics such as chloramphenicol, erythromycin and novobiocin. May be part of a tripartite ATP-independent periplasmic (TRAP) transport system. The sequence is that of Probable solute-binding protein AdeT1 from Acinetobacter baumannii.